Consider the following 184-residue polypeptide: Large ribosomal subunit protein uL15 (184 aa).

The disordered stretch occupies residues 1–50; the sequence is MDLSSLRPAKGAVKNKKRVGRGQGSGNGTTAGKGNKGQQARSGYKRPINE. Gly residues predominate over residues 21-35; sequence RGQGSGNGTTAGKGN.

Belongs to the universal ribosomal protein uL15 family. Part of the 50S ribosomal subunit.

Functionally, binds to the 23S rRNA. The chain is Large ribosomal subunit protein uL15 from Chlorobium luteolum (strain DSM 273 / BCRC 81028 / 2530) (Pelodictyon luteolum).